The following is a 1247-amino-acid chain: Probable phosphorylase b kinase regulatory subunit alpha (1247 aa).

Residues 853-883 (LKGLYEKACQQKLWGLVRHTAGMLGKRVEDL) form a calmodulin-binding region. A phosphoserine mark is found at Ser-1030 and Ser-1033. The tract at residues 1052–1089 (DRQGQWLRRRRLDGALNRVPRDFYSRVWTVLEKCQGLA) is calmodulin-binding. Cys-1244 carries S-farnesyl cysteine lipidation.

The protein belongs to the phosphorylase b kinase regulatory chain family. Although the final Cys may be farnesylated, the terminal tripeptide is probably not removed, and the C-terminus is not methylated.

The protein localises to the cell membrane. It functions in the pathway glycan biosynthesis; glycogen metabolism. Its function is as follows. Phosphorylase b kinase catalyzes the phosphorylation of serine in certain substrates, including troponin I. The alpha chain may bind calmodulin. The protein is Probable phosphorylase b kinase regulatory subunit alpha of Drosophila melanogaster (Fruit fly).